A 486-amino-acid chain; its full sequence is Cobyric acid synthase (486 aa).

The region spanning R251–A439 is the GATase cobBQ-type domain. The active-site Nucleophile is the C333. H431 is a catalytic residue.

This sequence belongs to the CobB/CobQ family. CobQ subfamily.

Its pathway is cofactor biosynthesis; adenosylcobalamin biosynthesis. Its function is as follows. Catalyzes amidations at positions B, D, E, and G on adenosylcobyrinic A,C-diamide. NH(2) groups are provided by glutamine, and one molecule of ATP is hydrogenolyzed for each amidation. The chain is Cobyric acid synthase from Caulobacter sp. (strain K31).